Consider the following 507-residue polypeptide: ATP synthase subunit alpha, chloroplastic (507 aa).

170–177 (GDRQTGKT) serves as a coordination point for ATP.

Belongs to the ATPase alpha/beta chains family. In terms of assembly, F-type ATPases have 2 components, CF(1) - the catalytic core - and CF(0) - the membrane proton channel. CF(1) has five subunits: alpha(3), beta(3), gamma(1), delta(1), epsilon(1). CF(0) has four main subunits: a, b, b' and c.

It localises to the plastid. The protein resides in the chloroplast thylakoid membrane. The enzyme catalyses ATP + H2O + 4 H(+)(in) = ADP + phosphate + 5 H(+)(out). Functionally, produces ATP from ADP in the presence of a proton gradient across the membrane. The alpha chain is a regulatory subunit. This is ATP synthase subunit alpha, chloroplastic from Huperzia lucidula (Shining clubmoss).